We begin with the raw amino-acid sequence, 884 residues long: Translation initiation factor IF-2 (884 aa).

Disordered stretches follow at residues 42–62 (DVQK…QEEV) and 123–254 (EPKG…GGKK). Over residues 194 to 212 (PAERREVVIPPKRKMEERA) the composition is skewed to basic and acidic residues. Low complexity predominate over residues 234–248 (EPETPAGGAPGAKKG). The tr-type G domain occupies 384–553 (KRPPVVTIMG…LLQADVMDLK (170 aa)). The interval 393 to 400 (GHVDHGKT) is G1. Residue 393-400 (GHVDHGKT) participates in GTP binding. Positions 418 to 422 (GITQH) are G2. Residues 439–442 (DTPG) form a G3 region. GTP-binding positions include 439–443 (DTPGH) and 493–496 (NKID). The segment at 493–496 (NKID) is G4. The tract at residues 529–531 (SAK) is G5.

The protein belongs to the TRAFAC class translation factor GTPase superfamily. Classic translation factor GTPase family. IF-2 subfamily.

Its subcellular location is the cytoplasm. One of the essential components for the initiation of protein synthesis. Protects formylmethionyl-tRNA from spontaneous hydrolysis and promotes its binding to the 30S ribosomal subunits. Also involved in the hydrolysis of GTP during the formation of the 70S ribosomal complex. The protein is Translation initiation factor IF-2 of Geobacter metallireducens (strain ATCC 53774 / DSM 7210 / GS-15).